The sequence spans 232 residues: 5'-methylthioadenosine/S-adenosylhomocysteine nucleosidase (232 aa).

Glutamate 12 (proton acceptor) is an active-site residue. Residues glycine 78, isoleucine 152, and 173–174 contribute to the substrate site; that span reads ME. The active-site Proton donor is the aspartate 197.

It belongs to the PNP/UDP phosphorylase family. MtnN subfamily. In terms of assembly, homodimer.

It carries out the reaction S-adenosyl-L-homocysteine + H2O = S-(5-deoxy-D-ribos-5-yl)-L-homocysteine + adenine. The catalysed reaction is S-methyl-5'-thioadenosine + H2O = 5-(methylsulfanyl)-D-ribose + adenine. It catalyses the reaction 5'-deoxyadenosine + H2O = 5-deoxy-D-ribose + adenine. It functions in the pathway amino-acid biosynthesis; L-methionine biosynthesis via salvage pathway; S-methyl-5-thio-alpha-D-ribose 1-phosphate from S-methyl-5'-thioadenosine (hydrolase route): step 1/2. In terms of biological role, catalyzes the irreversible cleavage of the glycosidic bond in both 5'-methylthioadenosine (MTA) and S-adenosylhomocysteine (SAH/AdoHcy) to adenine and the corresponding thioribose, 5'-methylthioribose and S-ribosylhomocysteine, respectively. Also cleaves 5'-deoxyadenosine, a toxic by-product of radical S-adenosylmethionine (SAM) enzymes, into 5-deoxyribose and adenine. Thus, is required for in vivo function of the radical SAM enzymes biotin synthase and lipoic acid synthase, that are inhibited by 5'-deoxyadenosine accumulation. The chain is 5'-methylthioadenosine/S-adenosylhomocysteine nucleosidase from Citrobacter koseri (strain ATCC BAA-895 / CDC 4225-83 / SGSC4696).